We begin with the raw amino-acid sequence, 315 residues long: Ester hydrolase C11orf54 homolog (315 aa).

Zn(2+) is bound by residues His266, His268, and His278.

As to quaternary structure, monomer. Requires Zn(2+) as cofactor.

Its subcellular location is the nucleus. The protein resides in the cytoplasm. Functionally, exhibits ester hydrolase activity on the substrate p-nitrophenyl acetate, in vitro. Regulates DNA damage and repair by regulating HIF1A degradation via chaperone-mediated autophagy (CMA). The protein is Ester hydrolase C11orf54 homolog of Mus musculus (Mouse).